Consider the following 282-residue polypeptide: MLFNLNYIDPTAFSIGPLSIKWYGIIIAVGILIGYFIAQESLKYVGLHKDRLVDVIFYSAIFGFIAARIYFVIFQWPYYAQNPIEIPMIWHGGIAIHGGLLGGFITGIIVCKIKNLNPFQIGDIVAPSIILAQGIGRWGNFMNHEAHGGPVSRTFLENLHIPEFIIRNMYIEGVYYHPTFLYESIWDILGFIILITIRKHLRVGETFTLYLIWYSIGRFFVEGLRTDSLMLTSHIRVAQLVSVILIIIGLVILIYRRIKYQPSLYKEAGPLTWNSSKAKVKS.

3 helical membrane passes run 18 to 38 (LSIK…YFIA), 55 to 75 (VIFY…VIFQ), and 89 to 109 (IWHG…TGII). Residue Arg137 participates in a 1,2-diacyl-sn-glycero-3-phospho-(1'-sn-glycerol) binding. 2 consecutive transmembrane segments (helical) span residues 203–223 (VGET…FVEG) and 235–255 (IRVA…ILIY).

The protein belongs to the Lgt family.

It is found in the cell membrane. The catalysed reaction is L-cysteinyl-[prolipoprotein] + a 1,2-diacyl-sn-glycero-3-phospho-(1'-sn-glycerol) = an S-1,2-diacyl-sn-glyceryl-L-cysteinyl-[prolipoprotein] + sn-glycerol 1-phosphate + H(+). The protein operates within protein modification; lipoprotein biosynthesis (diacylglyceryl transfer). Catalyzes the transfer of the diacylglyceryl group from phosphatidylglycerol to the sulfhydryl group of the N-terminal cysteine of a prolipoprotein, the first step in the formation of mature lipoproteins. The polypeptide is Phosphatidylglycerol--prolipoprotein diacylglyceryl transferase (Staphylococcus haemolyticus (strain JCSC1435)).